A 364-amino-acid chain; its full sequence is Developmentally-regulated GTP-binding protein 2 (364 aa).

(3S)-3-hydroxylysine is present on Lys-21. An OBG-type G domain is found at 63–288; that stretch reads ARVALIGFPS…LLEMLWEYLA (226 aa). Residues 69-76, 94-98, 115-118, 246-249, and 269-271 each bind GTP; these read GFPSVGKS, FTTLT, DLPG, NKID, and SCG. Residues Ser-76 and Thr-96 each coordinate Mg(2+). The TGS domain maps to 288 to 363; the sequence is ALTCIYTKKR…EHEDVIQIVK (76 aa).

This sequence belongs to the TRAFAC class OBG-HflX-like GTPase superfamily. OBG GTPase family. In terms of assembly, interacts with RWDD1; this interaction confers protection to polyubiquitination and proteolytic degradation. Interacts with JMJD7; this interaction is direct. It depends on Mg(2+) as a cofactor. Polyubiquitinated. Post-translationally, hydroxylated (with S stereochemistry) at C-3 of Lys-21 by JMJD7.

Its subcellular location is the nucleus. It is found in the cytoplasm. The enzyme catalyses GTP + H2O = GDP + phosphate + H(+). Functionally, catalyzes the conversion of GTP to GDP through hydrolysis of the gamma-phosphate bond in GTP. When hydroxylated at C-3 of 'Lys-21' by JMJD7, may bind to RNA and play a role in translation. The polypeptide is Developmentally-regulated GTP-binding protein 2 (DRG2) (Bos taurus (Bovine)).